Here is a 420-residue protein sequence, read N- to C-terminus: Protein disulfide isomerase Creld1 (420 aa).

The signal sequence occupies residues 1 to 29; it reads MAPLPPRGLVPSLLWCLSLFLSLPGPVWL. Topologically, residues 30-362 are extracellular; sequence QPSPPPHPSP…GFFAEMTEDE (333 aa). The short motif at 46 to 49 is the CXXC element; it reads CHTC. Disulfide bonds link C46–C49, C155–C169, C163–C181, and C183–C192. An EGF-like 1 domain is found at 153 to 193; the sequence is LPCPGGTERPCGGYGQCEGEGTRGGSGHCDCQAGYGGEACG. Residue N205 is glycosylated (N-linked (GlcNAc...) asparagine). 2 FU repeats span residues 208–255 and 268–315; these read HLVC…EQAT and SYEC…VVCP. Positions 278-281 match the CXXC motif; sequence CLGC. Disulfide bonds link C278–C281, C309–C321, C314–C330, and C332–C343. Residues 305-342 form the EGF-like 2; calcium-binding domain; that stretch reads DVDECETVVCPGENEKCENTEGGYRCVCAEGYRQEDGI. A helical membrane pass occupies residues 363 to 383; that stretch reads MVVLQQMFFGVIICALATLAA. A topological domain (cytoplasmic) is located at residue K384. Residues 385–405 traverse the membrane as a helical segment; sequence GDLVFTAIFIGAVAAMTGYWL. Residues 406 to 420 lie on the Extracellular side of the membrane; that stretch reads SERSDRVLEGFIKGR.

This sequence belongs to the CRELD family. In terms of tissue distribution, expressed in myoblast C2C12 cells (at protein level).

It localises to the membrane. It catalyses the reaction Catalyzes the rearrangement of -S-S- bonds in proteins.. In terms of biological role, protein disulfide isomerase. Promotes the localization of acetylcholine receptors (AChRs) to the plasma membrane. The polypeptide is Protein disulfide isomerase Creld1 (Creld1) (Mus musculus (Mouse)).